Reading from the N-terminus, the 340-residue chain is MSLLPHLMRLVEEQHLSAADAEAAMQIVLRGEASHAQIAAFLIALKMKGETVDELVGFARAMRAMAVPVSPNLEGATLLDTCGTGGDGAGTFNISTVAAFVVAAAGVHVAKHGNRSITSKCGSADLLEAWGIPVAMPPEATAFAIREVGIGFLFAPAVHTAMKHAHPVRVDLKLRTVFNLLGPLTNPAGATAQLIGAPSSHAAELMAGAIAALGLERGFVVHGSDGLDEITTTGPTLAFEVRNGKVERRTLEPADFAVAIAAPEDLKGGDLARNLEIADSVLAGAAGPHRDIVLVNAAAALVAAGKADTFLEGMALGVVAIDSGAARAKVKALADFAASR.

5-phospho-alpha-D-ribose 1-diphosphate is bound by residues Gly-83, 86–87, Thr-91, 93–96, 111–119, and Ser-123; these read GD, NIST, and KHGNRSITS. Gly-83 is an anthranilate binding site. A Mg(2+)-binding site is contributed by Ser-95. Anthranilate is bound at residue Asn-114. Arg-169 is an anthranilate binding site. Asp-228 and Glu-229 together coordinate Mg(2+).

Belongs to the anthranilate phosphoribosyltransferase family. As to quaternary structure, homodimer. Requires Mg(2+) as cofactor.

It catalyses the reaction N-(5-phospho-beta-D-ribosyl)anthranilate + diphosphate = 5-phospho-alpha-D-ribose 1-diphosphate + anthranilate. It functions in the pathway amino-acid biosynthesis; L-tryptophan biosynthesis; L-tryptophan from chorismate: step 2/5. Catalyzes the transfer of the phosphoribosyl group of 5-phosphorylribose-1-pyrophosphate (PRPP) to anthranilate to yield N-(5'-phosphoribosyl)-anthranilate (PRA). The sequence is that of Anthranilate phosphoribosyltransferase from Solibacter usitatus (strain Ellin6076).